The primary structure comprises 1355 residues: Collagen alpha-2(I) chain (1355 aa).

The N-terminal stretch at 1-22 (MLSFVDLRSVLLLAVTLYLVTC) is a signal peptide. A Pyrrolidone carboxylic acid modification is found at Q23. Positions 23–71 (QEVRRGPRGDKGPPGEQGPPGIPGRDGEDGLPGLPGPPGVPGLGGNFAA) are cleaved as a propeptide — N-terminal propeptide. Residues 26–35 (RRGPRGDKGP) show a composition bias toward basic and acidic residues. A disordered region spans residues 26–1111 (RRGPRGDKGP…GDGGEYYRAD (1086 aa)). Position 72 is a pyrrolidone carboxylic acid (Q72). Position 77 is an allysine (K77). Positions 99–108 (PGSQGFQGLP) are enriched in low complexity. Residues 132-146 (AGEDGHPGKSGRPGE) are compositionally biased toward basic and acidic residues. K168 carries the post-translational modification 5-hydroxylysine; alternate. O-linked (Gal...) hydroxylysine; alternate glycosylation is present at K168. Residues 218 to 267 (PAGSAGSRGSDGSSGPVGPAGPIGSAGAPGLPGAPGAKGELGPAGNNGPT) show a composition bias toward low complexity. Positions 276–290 (PGPPGSLGPAGPPGN) are enriched in pro residues. A compositionally biased stretch (low complexity) spans 291 to 303 (PGTNGVNGAKGTA). Gly residues predominate over residues 304 to 322 (GLPGVGGAPGLPGGRGIPG). The segment covering 327–336 (AGPSGARGLA) has biased composition (low complexity). Gly residues-rich tracts occupy residues 340–349 (GIAGGKGDTG) and 403–412 (GRAGGIGPAG). Composition is skewed to low complexity over residues 413–426 (SRGS…RGPN) and 465–495 (EGRS…NGEP). Composition is skewed to gly residues over residues 523-532 (GPAGLGGATG) and 586-595 (GESGGAGPHG). Low complexity predominate over residues 596 to 618 (PSGSRGPSGAPGPDGQKGEPGAA). The segment covering 619–628 (GLNGGLGPSG) has biased composition (gly residues). Composition is skewed to low complexity over residues 659 to 675 (NPGR…AGAP), 687 to 701 (SGPA…PRGA), and 708 to 726 (AGPA…AGHT). Residues 728 to 738 (AKGDRGAKGPK) are compositionally biased toward basic and acidic residues. 2 stretches are compositionally biased toward low complexity: residues 741–767 (AGSP…STGA) and 776–788 (ATGF…RAGA). Positions 804–813 (PGKDGSRGPR) are enriched in basic and acidic residues. The segment covering 852 to 869 (AGPSGVLGARGILGLPGT) has biased composition (low complexity). A compositionally biased stretch (gly residues) spans 874–883 (GLPGGPGSNG). Low complexity-rich tracts occupy residues 884 to 912 (EPGP…VGHS) and 947 to 966 (PSGL…AGKS). Residues 967 to 976 (GNRGEGGPSG) are compositionally biased toward gly residues. Residues 996-1014 (RGDKGEAGERGARGLDGRK) are compositionally biased toward basic and acidic residues. Positions 1019–1041 (LSGLPGPSGTPGETGPSGSVGPV) are enriched in low complexity. Over residues 1080–1091 (AGPPGPPGPPGH) the composition is skewed to pro residues. A compositionally biased stretch (gly residues) spans 1093–1105 (GPSGGGYDGGDGG). The propeptide at 1111-1355 (DQPERKPKDY…GFEIGPVCFK (245 aa)) is C-terminal propeptide. The region spanning 1120–1355 (YEVDATLKSL…GFEIGPVCFK (236 aa)) is the Fibrillar collagen NC1 domain. 3 disulfide bridges follow: C1150/C1182, C1190/C1353, and C1261/C1306. D1168, N1170, Q1171, C1173, and D1176 together coordinate Ca(2+). 2 N-linked (GlcNAc...) asparagine glycosylation sites follow: N1206 and N1256.

The protein belongs to the fibrillar collagen family. In terms of assembly, trimers of one alpha 2(I) and two alpha 1(I) chains. Prolines at the third position of the tripeptide repeating unit (G-X-Y) are hydroxylated in some or all of the chains. In terms of tissue distribution, forms the fibrils of tendon, ligaments and bones. In bones the fibrils are mineralized with calcium hydroxyapatite.

The protein localises to the secreted. It localises to the extracellular space. Its subcellular location is the extracellular matrix. Its function is as follows. Type I collagen is a member of group I collagen (fibrillar forming collagen). This Aquarana catesbeiana (American bullfrog) protein is Collagen alpha-2(I) chain (COL1A2).